Consider the following 743-residue polypeptide: Dolichyl-phosphooligosaccharide-protein glycotransferase 2 (743 aa).

Topologically, residues 1 to 7 (MKIDKRL) are cytoplasmic. A helical transmembrane segment spans residues 8–28 (MVIVAIATLFRMIPFRLKYLV). The DXD motif 1 motif lies at 29–31 (GSD). The Extracellular portion of the chain corresponds to 29 to 91 (GSDPYFHLAY…FSFLGISLYT (63 aa)). Residue aspartate 31 participates in Mn(2+) binding. A helical transmembrane segment spans residues 92–112 (AFRVTPVIFGVLTVVFFYLSL). The Cytoplasmic portion of the chain corresponds to 113-119 (KKLYNRD). The helical transmembrane segment at 120–140 (VAFIVGLFLGVNYGHIFRSMA) threads the bilayer. Residues 141-144 (NYYR) are Extracellular-facing. Arginine 144 and aspartate 146 together coordinate Mn(2+). A DXD motif 2 motif is present at residues 144–146 (RGD). A helical transmembrane segment spans residues 145–165 (GDNYMLFWYSVALLGIALGLK). The Cytoplasmic portion of the chain corresponds to 166–170 (TRSKY). The next 2 helical transmembrane spans lie at 171 to 191 (RYLF…FWQA) and 192 to 212 (YYPI…YAYL). The Cytoplasmic segment spans residues 213–216 (KSPK). The chain crosses the membrane as a helical span at residues 217-237 (LFLDSILIVLSTGLGVLIANI). Residues 238–272 (LGDKVGYGMLGYTDWMGKKVAETFGLEFGFIKDAY) lie on the Extracellular side of the membrane. A helical membrane pass occupies residues 273 to 293 (LLIHVKYLLPLSLVFLGFLII). At 294–302 (TKKLNPKIK) the chain is on the cytoplasmic side. A helical transmembrane segment spans residues 303 to 323 (VGVLVGGSILAFIVMLVKFPA). Over 324–345 (LKDLSTGFGTFREVPISETLPP) the chain is Extracellular. The short motif at 333–336 (TFRE) is the TIXE motif element. A helical membrane pass occupies residues 346-366 (TLDDLWRAYNIAIFLAALYIL). At 367–373 (RLRKIRS) the chain is on the cytoplasmic side. Residues 374–391 (GDAILLGYVITSLWMLRY) traverse the membrane as a helical segment. At 392-394 (WTR) the chain is on the extracellular side. Arginine 394 provides a ligand contact to a glycophospholipid. The chain crosses the membrane as a helical span at residues 395 to 415 (FLFTAAPAVAFLSGIGVYELT). The Cytoplasmic portion of the chain corresponds to 416 to 424 (RRIKENKIR). Residues 425–445 (ITSLGVVILLSSAFSLGEVYS) form a helical membrane-spanning segment. The Extracellular segment spans residues 446 to 743 (VKPFMNENWE…LDRGIVRVKN (298 aa)). The segment at 474-476 (WWD) is interacts with target acceptor peptide in protein substrate. The WWDYG motif signature appears at 474 to 478 (WWDWG). The short motif at 526 to 533 (DILKFEAI) is the DK motif element.

The protein belongs to the STT3 family. The cofactor is Mn(2+). Requires Mg(2+) as cofactor.

It is found in the cell membrane. The enzyme catalyses an archaeal dolichyl phosphooligosaccharide + [protein]-L-asparagine = an archaeal dolichyl phosphate + a glycoprotein with the oligosaccharide chain attached by N-beta-D-glycosyl linkage to a protein L-asparagine.. It participates in protein modification; protein glycosylation. Its function is as follows. Oligosaccharyl transferase (OST) that catalyzes the initial transfer of a defined glycan (ManNAcXyl(2)GlcAMan(2)GalNAc in P.furiosus) from the lipid carrier dolichol-monophosphate to an asparagine residue within an Asn-X-Ser/Thr consensus motif in nascent polypeptide chains, the first step in protein N-glycosylation. This is Dolichyl-phosphooligosaccharide-protein glycotransferase 2 (aglB2) from Pyrococcus furiosus (strain ATCC 43587 / DSM 3638 / JCM 8422 / Vc1).